Reading from the N-terminus, the 359-residue chain is Lachesin (359 aa).

Positions Met1–Ala25 are cleaved as a signal peptide. The Ig-like V-type domain occupies Pro29–Ser130. Cys50 and Cys113 are joined by a disulfide. Asn92 and Asn140 each carry an N-linked (GlcNAc...) asparagine glycan. Ig-like C2-type domains follow at residues Pro135–Glu221 and Pro226–Asn317. 2 disulfide bridges follow: Cys157–Cys204 and Cys247–Cys303. Ala336 carries GPI-anchor amidated alanine lipidation. The propeptide at Gly337–Arg359 is removed in mature form.

Expressed on differentiating neuronal cells from the onset of neurogenesis in both the central and peripheral nervous systems. First detected in the cellularized blastoderm, apart from in the ventral side. Expression persists uniformly in the early ectoderm until the end of gastrulation. From stage 10, expressed in an alternating strong/weak pattern in each segment until stage 15 when it disappears. From stage 11, expressed in subsets of neurons and later subsets of glial cells. From early stage 13, strongly expressed in trachea, hindgut, foregut and the nervous system.

Its subcellular location is the cell membrane. In terms of biological role, required for normal tracheal development and maintenance of the trans-epithelial diffusion barrier. Functions as a homophilic cell-adhesion molecule. May play a role in early neuronal differentiation and axon outgrowth. The chain is Lachesin (Lac) from Drosophila melanogaster (Fruit fly).